A 404-amino-acid polypeptide reads, in one-letter code: Cysteine desulfurase IscS (404 aa).

Residues 75–76 (AT), Asn-155, Gln-183, and 203–205 (SAH) contribute to the pyridoxal 5'-phosphate site. Lys-206 carries the N6-(pyridoxal phosphate)lysine modification. Thr-243 provides a ligand contact to pyridoxal 5'-phosphate. The Cysteine persulfide intermediate role is filled by Cys-328. Residue Cys-328 participates in [2Fe-2S] cluster binding.

Belongs to the class-V pyridoxal-phosphate-dependent aminotransferase family. NifS/IscS subfamily. In terms of assembly, homodimer. Forms a heterotetramer with IscU, interacts with other sulfur acceptors. Requires pyridoxal 5'-phosphate as cofactor.

The protein localises to the cytoplasm. The enzyme catalyses (sulfur carrier)-H + L-cysteine = (sulfur carrier)-SH + L-alanine. The protein operates within cofactor biosynthesis; iron-sulfur cluster biosynthesis. In terms of biological role, master enzyme that delivers sulfur to a number of partners involved in Fe-S cluster assembly, tRNA modification or cofactor biosynthesis. Catalyzes the removal of elemental sulfur atoms from cysteine to produce alanine. Functions as a sulfur delivery protein for Fe-S cluster synthesis onto IscU, an Fe-S scaffold assembly protein, as well as other S acceptor proteins. This is Cysteine desulfurase IscS from Ectopseudomonas mendocina (strain ymp) (Pseudomonas mendocina).